The sequence spans 368 residues: Homoserine O-acetyltransferase (368 aa).

One can recognise an AB hydrolase-1 domain in the interval 44 to 350 (NAILVAHAWT…AYGHDAFLLE (307 aa)). The Nucleophile role is filled by serine 150. Residue arginine 217 coordinates substrate. Active-site residues include aspartate 311 and histidine 344. Substrate is bound at residue aspartate 345.

This sequence belongs to the AB hydrolase superfamily. MetX family. In terms of assembly, homodimer.

Its subcellular location is the cytoplasm. It catalyses the reaction L-homoserine + acetyl-CoA = O-acetyl-L-homoserine + CoA. The protein operates within amino-acid biosynthesis; L-methionine biosynthesis via de novo pathway; O-acetyl-L-homoserine from L-homoserine: step 1/1. Its function is as follows. Transfers an acetyl group from acetyl-CoA to L-homoserine, forming acetyl-L-homoserine. This is Homoserine O-acetyltransferase from Geobacter sulfurreducens (strain ATCC 51573 / DSM 12127 / PCA).